The following is a 210-amino-acid chain: uncharacterized protein (210 aa).

An N-terminal signal peptide occupies residues 1-20 (MRVITLSGITLFLLASLASA). At 21 to 175 (IELTFKLENQ…YSTVKSTQAR (155 aa)) the chain is on the lumenal side. The region spanning 32–115 (KQCYYLDSFH…DKIVTMEITM (84 aa)) is the GOLD domain. N-linked (GlcNAc...) asparagine glycosylation is present at N165. A helical transmembrane segment spans residues 176-196 (IFWFSLAESIMVVALSALQVF). Residues 197–210 (IVKTFFKRSGRRGV) lie on the Cytoplasmic side of the membrane.

This sequence belongs to the EMP24/GP25L family.

The protein resides in the endoplasmic reticulum membrane. This is an uncharacterized protein from Schizosaccharomyces pombe (strain 972 / ATCC 24843) (Fission yeast).